The sequence spans 120 residues: U13-lycotoxin-Ls1a (120 aa).

The signal sequence occupies residues 1-16 (MKILFVLISILYAVYC). A propeptide spanning residues 17 to 54 (FSSEEDVDSAYLANELEPVEDINSEQYAALEPKEEQER) is cleaved from the precursor. Cystine bridges form between cysteine 56–cysteine 70, cysteine 63–cysteine 76, cysteine 69–cysteine 87, and cysteine 78–cysteine 85. The region spanning 56–95 (CADMGQDCKDDCDCCLNIATCNCWFGRYFCSCTFGDYQTC) is the Agouti domain.

The protein belongs to the neurotoxin 05 (agouti) family. Post-translationally, contains 6 disulfide bonds. In terms of tissue distribution, expressed by the venom gland.

The protein resides in the secreted. This Lycosa singoriensis (Wolf spider) protein is U13-lycotoxin-Ls1a.